The chain runs to 173 residues: Adenine phosphoribosyltransferase (173 aa).

It belongs to the purine/pyrimidine phosphoribosyltransferase family. In terms of assembly, homodimer.

It is found in the cytoplasm. It catalyses the reaction AMP + diphosphate = 5-phospho-alpha-D-ribose 1-diphosphate + adenine. It functions in the pathway purine metabolism; AMP biosynthesis via salvage pathway; AMP from adenine: step 1/1. Functionally, catalyzes a salvage reaction resulting in the formation of AMP, that is energically less costly than de novo synthesis. The polypeptide is Adenine phosphoribosyltransferase (Petrotoga mobilis (strain DSM 10674 / SJ95)).